A 211-amino-acid polypeptide reads, in one-letter code: Thymidylate kinase (211 aa).

10 to 17 provides a ligand contact to ATP; the sequence is GGDGVGKS.

It belongs to the thymidylate kinase family.

It carries out the reaction dTMP + ATP = dTDP + ADP. Its function is as follows. Phosphorylation of dTMP to form dTDP in both de novo and salvage pathways of dTTP synthesis. In Clavibacter michiganensis subsp. michiganensis (strain NCPPB 382), this protein is Thymidylate kinase.